The primary structure comprises 279 residues: Large ribosomal subunit protein uL2 (279 aa).

Residues alanine 224–lysine 279 form a disordered region.

The protein belongs to the universal ribosomal protein uL2 family. In terms of assembly, part of the 50S ribosomal subunit. Forms a bridge to the 30S subunit in the 70S ribosome.

In terms of biological role, one of the primary rRNA binding proteins. Required for association of the 30S and 50S subunits to form the 70S ribosome, for tRNA binding and peptide bond formation. It has been suggested to have peptidyltransferase activity; this is somewhat controversial. Makes several contacts with the 16S rRNA in the 70S ribosome. This Elusimicrobium minutum (strain Pei191) protein is Large ribosomal subunit protein uL2.